The following is a 351-amino-acid chain: Silk gland factor 3 (351 aa).

2 disordered regions span residues 61–88 (ADPW…HDHR) and 131–154 (SSPR…TPTS). The segment covering 135-145 (DPLHHHAMERD) has biased composition (basic and acidic residues). Residues 149 to 223 (EDTPTSDDLE…LLQKWLEEAD (75 aa)) form the POU-specific domain. Residues 241 to 300 (KRKKRTSIEVSVKGALEQHFHKQPKPSAQEITSLADSLQLEKEVVRVWFCNRRQKEKRMT) constitute a DNA-binding region (homeobox). The interval 314–351 (GHAHYGHGDVHGSPLQHSPPGLSPQHGLPQGAHTLAAH) is disordered.

This sequence belongs to the POU transcription factor family. Class-3 subfamily. Restricted to the middle silk gland.

Its subcellular location is the nucleus. Involved in the transcriptional regulation of sericin-1 gene. This Bombyx mori (Silk moth) protein is Silk gland factor 3 (SGF3).